We begin with the raw amino-acid sequence, 128 residues long: Large ribosomal subunit protein bL17 (128 aa).

The protein belongs to the bacterial ribosomal protein bL17 family. As to quaternary structure, part of the 50S ribosomal subunit. Contacts protein L32.

This is Large ribosomal subunit protein bL17 from Streptococcus mutans serotype c (strain ATCC 700610 / UA159).